Consider the following 158-residue polypeptide: NAD(P)H-quinone oxidoreductase subunit J, chloroplastic (158 aa).

This sequence belongs to the complex I 30 kDa subunit family. As to quaternary structure, NDH is composed of at least 16 different subunits, 5 of which are encoded in the nucleus.

It localises to the plastid. It is found in the chloroplast thylakoid membrane. It carries out the reaction a plastoquinone + NADH + (n+1) H(+)(in) = a plastoquinol + NAD(+) + n H(+)(out). It catalyses the reaction a plastoquinone + NADPH + (n+1) H(+)(in) = a plastoquinol + NADP(+) + n H(+)(out). In terms of biological role, NDH shuttles electrons from NAD(P)H:plastoquinone, via FMN and iron-sulfur (Fe-S) centers, to quinones in the photosynthetic chain and possibly in a chloroplast respiratory chain. The immediate electron acceptor for the enzyme in this species is believed to be plastoquinone. Couples the redox reaction to proton translocation, and thus conserves the redox energy in a proton gradient. This Pelargonium hortorum (Common geranium) protein is NAD(P)H-quinone oxidoreductase subunit J, chloroplastic.